A 121-amino-acid polypeptide reads, in one-letter code: UPF0102 protein Strop_1320 (121 aa).

Belongs to the UPF0102 family.

The sequence is that of UPF0102 protein Strop_1320 from Salinispora tropica (strain ATCC BAA-916 / DSM 44818 / JCM 13857 / NBRC 105044 / CNB-440).